The following is a 322-amino-acid chain: Nodulation protein Z (322 aa).

The GT23 domain occupies 1 to 314 (MYNRYVLSRR…NDPSRLVVIE (314 aa)).

Belongs to the glycosyltransferase 23 family.

Functionally, fucosyltransferase which adds the fucose moiety of the nod factor on its terminal reducing N-acetylglucosamine end. Uses GDP-fucose as the donor group. The chain is Nodulation protein Z (nodZ) from Sinorhizobium fredii (strain NBRC 101917 / NGR234).